The primary structure comprises 290 residues: ATP synthase gamma chain (290 aa).

Belongs to the ATPase gamma chain family. As to quaternary structure, F-type ATPases have 2 components, CF(1) - the catalytic core - and CF(0) - the membrane proton channel. CF(1) has five subunits: alpha(3), beta(3), gamma(1), delta(1), epsilon(1). CF(0) has three main subunits: a, b and c.

The protein localises to the cell inner membrane. Produces ATP from ADP in the presence of a proton gradient across the membrane. The gamma chain is believed to be important in regulating ATPase activity and the flow of protons through the CF(0) complex. In Bradyrhizobium diazoefficiens (strain JCM 10833 / BCRC 13528 / IAM 13628 / NBRC 14792 / USDA 110), this protein is ATP synthase gamma chain.